A 230-amino-acid polypeptide reads, in one-letter code: Small ribosomal subunit protein uS3 (230 aa).

The KH type-2 domain occupies 39 to 107 (IRKFLTEKLK…PAQINISEVR (69 aa)).

Belongs to the universal ribosomal protein uS3 family. In terms of assembly, part of the 30S ribosomal subunit. Forms a tight complex with proteins S10 and S14.

Its function is as follows. Binds the lower part of the 30S subunit head. Binds mRNA in the 70S ribosome, positioning it for translation. The sequence is that of Small ribosomal subunit protein uS3 from Psychromonas ingrahamii (strain DSM 17664 / CCUG 51855 / 37).